The following is a 291-amino-acid chain: GCN5-related N-acetyltransferase 4, chloroplastic (291 aa).

Residues Met-1 to Asn-61 constitute a chloroplast transit peptide. Positions Ile-76 to Asn-280 constitute an N-acetyltransferase domain. Residues Val-199–Val-201 and Arg-207–Lys-212 contribute to the acetyl-CoA site. At Lys-217 the chain carries N6-acetyllysine. Residues Asn-238–Gly-240 and Tyr-245 contribute to the acetyl-CoA site. Tyr-245 serves as the catalytic Proton donor. Residues Lys-254 and Lys-265 each carry the N6-acetyllysine modification.

It belongs to the acetyltransferase family. GNAT subfamily. In terms of assembly, oligomer. In terms of processing, autoacetylated at K-217, K-254 and K-265. Expressed in green tissues.

The protein resides in the plastid. Its subcellular location is the chloroplast. It carries out the reaction an N-terminal L-alpha-aminoacyl-[protein] + acetyl-CoA = N-terminal N(alpha)-acetyl-L-alpha-aminoacyl-[protein] + CoA + H(+). It catalyses the reaction L-lysyl-[protein] + acetyl-CoA = N(6)-acetyl-L-lysyl-[protein] + CoA + H(+). The catalysed reaction is N-terminal L-alanyl-[protein] + acetyl-CoA = N-terminal N(alpha)-acetyl-L-alanyl-[protein] + CoA + H(+). The enzyme catalyses N-terminal L-seryl-[protein] + acetyl-CoA = N-terminal N(alpha)-acetyl-L-seryl-[protein] + CoA + H(+). It carries out the reaction N-terminal L-threonyl-[protein] + acetyl-CoA = N-terminal N(alpha)-acetyl-L-threonyl-[protein] + CoA + H(+). It catalyses the reaction N-terminal L-methionyl-[protein] + acetyl-CoA = N-terminal N(alpha)-acetyl-L-methionyl-[protein] + CoA + H(+). The catalysed reaction is N-terminal L-valyl-[protein] + acetyl-CoA = N-terminal N(alpha)-acetyl-L-valyl-[protein] + CoA + H(+). The enzyme catalyses N-terminal glycyl-[protein] + acetyl-CoA = N-terminal N(alpha)-acetylglycyl-[protein] + CoA + H(+). Protein acetyltransferase with dual specificity triggering both N-alpha-acetylation (NTA), with a large spectrum of modified N-termini, including methionine, alanine, serine, threonine and to a lower extent glycine and valine as substrates, and epsilon-lysine acetylation (KA) of several plastid proteins. This Arabidopsis thaliana (Mouse-ear cress) protein is GCN5-related N-acetyltransferase 4, chloroplastic.